The following is a 406-amino-acid chain: MVHCAGCKRPILDRFLLNVLDRAWHVKCVQCCECKCNLTEKCFSREGKLYCKNDFFRCFGTKCAGCAQGISPSDLVRRARSKVFHLNCFTCMMCNKQLSTGEELYIIDENKFVCKEDYLSNSSVAKENSLHSATTGSDPSLSPDSQDPSQDDAKDSESANVSDKEGGSNENDDQNLGAKRRGPRTTIKAKQLETLKAAFAATPKPTRHIREQLAQETGLNMRVIQVWFQNRRSKERRMKQLSALGARRHAFFRSPRRMRPLVDRLEPGELIPNGPFSFYGDYQSEYYGPGGNYDFFPQGPPSSQAQTPVDLPFVPSSGPSGTPLGGLDHPLPGHHPSSEAQRFTDILAHPPGDSPSPEPSLPGPLHSMSAEVFGPSPPFSSLSVNGGASYGNHLSHPPEMNEAAVW.

LIM zinc-binding domains are found at residues 4–54 (CAGC…CKND) and 63–117 (CAGC…CKED). Disordered stretches follow at residues 128 to 189 (NSLH…TIKA) and 294 to 372 (DFFP…SAEV). Over residues 137–148 (SDPSLSPDSQDP) the composition is skewed to low complexity. A compositionally biased stretch (basic and acidic residues) spans 151–167 (DDAKDSESANVSDKEGG). S162 carries the post-translational modification Phosphoserine. Residues 180-239 (RRGPRTTIKAKQLETLKAAFAATPKPTRHIREQLAQETGLNMRVIQVWFQNRRSKERRMK) constitute a DNA-binding region (homeobox). A compositionally biased stretch (low complexity) spans 315–327 (PSSGPSGTPLGGL). Residues 352 to 362 (GDSPSPEPSLP) show a composition bias toward pro residues.

As to quaternary structure, interacts with LDB1 via the tandem LIM domains.

It localises to the nucleus. Its function is as follows. Potential transcription factor. May play a role in early mesoderm formation and later in lateral mesoderm differentiation and neurogenesis. The sequence is that of LIM/homeobox protein Lhx1 (Lhx1) from Mesocricetus auratus (Golden hamster).